Reading from the N-terminus, the 484-residue chain is RuvB-like helicase 1 (484 aa).

Low complexity predominate over residues 1-11 (MSMAASSSTAT). Residues 1-27 (MSMAASSSTATVQPSGIITQPPPPSTL) are disordered. 87-94 (GPPGTGKT) provides a ligand contact to ATP.

This sequence belongs to the RuvB family. As to quaternary structure, may form heterododecamers with RVB2. Component of the SWR1 chromatin remodeling complex, the INO80 chromatin remodeling complex, and of the R2TP complex.

The protein localises to the nucleus. The catalysed reaction is ATP + H2O = ADP + phosphate + H(+). In terms of biological role, DNA helicase which participates in several chromatin remodeling complexes, including the SWR1 and the INO80 complexes. The SWR1 complex mediates the ATP-dependent exchange of histone H2A for the H2A variant HZT1 leading to transcriptional regulation of selected genes by chromatin remodeling. The INO80 complex remodels chromatin by shifting nucleosomes and is involved in DNA repair. Also involved in pre-rRNA processing. In Cryptococcus neoformans var. neoformans serotype D (strain B-3501A) (Filobasidiella neoformans), this protein is RuvB-like helicase 1 (RVB1).